Here is a 524-residue protein sequence, read N- to C-terminus: 2-isopropylmalate synthase (524 aa).

A Pyruvate carboxyltransferase domain is found at 15 to 275 (VVVFDTTMRD…PYGTSVDPVH (261 aa)). Aspartate 24, histidine 212, histidine 214, and asparagine 248 together coordinate Mn(2+). The segment at 401 to 524 (RVSRLRVVAG…RPEAAIASGF (124 aa)) is regulatory domain.

This sequence belongs to the alpha-IPM synthase/homocitrate synthase family. LeuA type 1 subfamily. As to quaternary structure, homodimer. Mn(2+) is required as a cofactor.

It is found in the cytoplasm. The catalysed reaction is 3-methyl-2-oxobutanoate + acetyl-CoA + H2O = (2S)-2-isopropylmalate + CoA + H(+). The protein operates within amino-acid biosynthesis; L-leucine biosynthesis; L-leucine from 3-methyl-2-oxobutanoate: step 1/4. In terms of biological role, catalyzes the condensation of the acetyl group of acetyl-CoA with 3-methyl-2-oxobutanoate (2-ketoisovalerate) to form 3-carboxy-3-hydroxy-4-methylpentanoate (2-isopropylmalate). This chain is 2-isopropylmalate synthase, found in Caulobacter vibrioides (strain ATCC 19089 / CIP 103742 / CB 15) (Caulobacter crescentus).